A 602-amino-acid chain; its full sequence is Translation factor GUF1 homolog, organellar chromatophore (602 aa).

The tr-type G domain maps to 7–189 (SRIRNFCIIA…AIVERIPPPV (183 aa)). Residues 16–23 (AHIDHGKS), 82–86 (DTPGH), and 136–139 (NKID) each bind GTP.

Belongs to the TRAFAC class translation factor GTPase superfamily. Classic translation factor GTPase family. LepA subfamily.

Its subcellular location is the plastid. The protein localises to the organellar chromatophore. The catalysed reaction is GTP + H2O = GDP + phosphate + H(+). Functionally, promotes protein synthesis. May act as a fidelity factor of the translation reaction, by catalyzing a one-codon backward translocation of tRNAs on improperly translocated ribosomes. The sequence is that of Translation factor GUF1 homolog, organellar chromatophore from Paulinella chromatophora.